The chain runs to 86 residues: MHLSTALFSAIALLAATQVIGASVEVPRDVAAIQIATSPYYACNCPNNCKHKKGSGCKYHSGPSDKSKVISGKCEWQGGQLNCIAT.

The N-terminal stretch at 1–21 (MHLSTALFSAIALLAATQVIG) is a signal peptide. Disulfide bonds link cysteine 43–cysteine 57, cysteine 45–cysteine 74, and cysteine 49–cysteine 83. The interval 44-54 (NCPNNCKHKKG) is lipid-binding. Residues 72–83 (GKCEWQGGQLNC) carry the Gamma-core motif.

It localises to the secreted. Its function is as follows. Cysteine-rich antifungal protein highly effective against yeasts such as clinically relevant Candida species, including the multidrug-resistant pathogen Candida auris. Does not cause metabolic inactivity and apoptosis induction, but the fungal cell-killing activity is connected to its pore-forming ability in the cell membrane. NFAP2 has a low potential to trigger resistance in C.albicans in vitro, and the developed tolerance to NFAP2 is not associated with severe phenotypic changes compared with development of resistance to generic fluconazole. This is Antifungal protein 2 from Neosartorya fischeri (strain ATCC 1020 / DSM 3700 / CBS 544.65 / FGSC A1164 / JCM 1740 / NRRL 181 / WB 181) (Aspergillus fischerianus).